The sequence spans 273 residues: Shikimate dehydrogenase (NADP(+)) (273 aa).

Shikimate-binding positions include 14 to 16 (SKS) and Thr61. Residue Lys65 is the Proton acceptor of the active site. Glu77 contributes to the NADP(+) binding site. Shikimate contacts are provided by Asn86 and Asp102. Residues 126 to 130 (GAGGA), 150 to 155 (NRTYEK), and Met213 each bind NADP(+). A shikimate-binding site is contributed by Tyr215. Residue Gly237 coordinates NADP(+).

The protein belongs to the shikimate dehydrogenase family. Homodimer.

It catalyses the reaction shikimate + NADP(+) = 3-dehydroshikimate + NADPH + H(+). Its pathway is metabolic intermediate biosynthesis; chorismate biosynthesis; chorismate from D-erythrose 4-phosphate and phosphoenolpyruvate: step 4/7. Functionally, involved in the biosynthesis of the chorismate, which leads to the biosynthesis of aromatic amino acids. Catalyzes the reversible NADPH linked reduction of 3-dehydroshikimate (DHSA) to yield shikimate (SA). The protein is Shikimate dehydrogenase (NADP(+)) of Aliivibrio fischeri (strain MJ11) (Vibrio fischeri).